A 456-amino-acid polypeptide reads, in one-letter code: Bifunctional protein GlmU (456 aa).

A pyrophosphorylase region spans residues 1–227 (MKLRVVILAA…AQEVEGANNR (227 aa)). UDP-N-acetyl-alpha-D-glucosamine contacts are provided by residues 8–11 (LAAG), K22, Q73, 78–79 (GT), 100–102 (YGD), G137, E152, N167, and N225. A Mg(2+)-binding site is contributed by D102. N225 contacts Mg(2+). Residues 228–248 (QQLASLERALQQRQAEELMTQ) are linker. Residues 249–456 (GVTLIDPARF…WQRPQSKKGT (208 aa)) are N-acetyltransferase. 2 residues coordinate UDP-N-acetyl-alpha-D-glucosamine: R331 and K349. H361 functions as the Proton acceptor in the catalytic mechanism. Residues Y364 and N375 each coordinate UDP-N-acetyl-alpha-D-glucosamine. Acetyl-CoA contacts are provided by residues A378, 384 to 385 (NY), S403, A421, and R438.

In the N-terminal section; belongs to the N-acetylglucosamine-1-phosphate uridyltransferase family. The protein in the C-terminal section; belongs to the transferase hexapeptide repeat family. As to quaternary structure, homotrimer. Mg(2+) serves as cofactor.

Its subcellular location is the cytoplasm. The enzyme catalyses alpha-D-glucosamine 1-phosphate + acetyl-CoA = N-acetyl-alpha-D-glucosamine 1-phosphate + CoA + H(+). It carries out the reaction N-acetyl-alpha-D-glucosamine 1-phosphate + UTP + H(+) = UDP-N-acetyl-alpha-D-glucosamine + diphosphate. It functions in the pathway nucleotide-sugar biosynthesis; UDP-N-acetyl-alpha-D-glucosamine biosynthesis; N-acetyl-alpha-D-glucosamine 1-phosphate from alpha-D-glucosamine 6-phosphate (route II): step 2/2. The protein operates within nucleotide-sugar biosynthesis; UDP-N-acetyl-alpha-D-glucosamine biosynthesis; UDP-N-acetyl-alpha-D-glucosamine from N-acetyl-alpha-D-glucosamine 1-phosphate: step 1/1. Its pathway is bacterial outer membrane biogenesis; LPS lipid A biosynthesis. Functionally, catalyzes the last two sequential reactions in the de novo biosynthetic pathway for UDP-N-acetylglucosamine (UDP-GlcNAc). The C-terminal domain catalyzes the transfer of acetyl group from acetyl coenzyme A to glucosamine-1-phosphate (GlcN-1-P) to produce N-acetylglucosamine-1-phosphate (GlcNAc-1-P), which is converted into UDP-GlcNAc by the transfer of uridine 5-monophosphate (from uridine 5-triphosphate), a reaction catalyzed by the N-terminal domain. In Idiomarina loihiensis (strain ATCC BAA-735 / DSM 15497 / L2-TR), this protein is Bifunctional protein GlmU.